Reading from the N-terminus, the 423-residue chain is Glutamate-1-semialdehyde 2,1-aminomutase (423 aa).

Lys262 is modified (N6-(pyridoxal phosphate)lysine).

Belongs to the class-III pyridoxal-phosphate-dependent aminotransferase family. HemL subfamily. In terms of assembly, homodimer. The cofactor is pyridoxal 5'-phosphate.

The protein localises to the cytoplasm. The enzyme catalyses (S)-4-amino-5-oxopentanoate = 5-aminolevulinate. Its pathway is porphyrin-containing compound metabolism; protoporphyrin-IX biosynthesis; 5-aminolevulinate from L-glutamyl-tRNA(Glu): step 2/2. The chain is Glutamate-1-semialdehyde 2,1-aminomutase from Campylobacter fetus subsp. fetus (strain 82-40).